A 196-amino-acid chain; its full sequence is NADPH:quinone oxidoreductase (196 aa).

The protein belongs to the SsuE family. Homotetramer. Requires FMN as cofactor.

Its subcellular location is the cell membrane. The catalysed reaction is a quinone + NADH + H(+) = a quinol + NAD(+). It carries out the reaction a quinone + NADPH + H(+) = a quinol + NADP(+). Functionally, the enzyme apparently serves as a quinone reductase in connection with conjugation reactions of hydroquinones involved in detoxification pathways. This is NADPH:quinone oxidoreductase (NQR) from Arabidopsis thaliana (Mouse-ear cress).